Reading from the N-terminus, the 852-residue chain is Envelope glycoprotein gp160 (852 aa).

The first 24 residues, 1 to 24 (MAHVNNYLLVTLLLISIYGYMGKN), serve as a signal peptide directing secretion. Topologically, residues 25 to 677 (FVTVFYGIPA…FTSWMAYIRL (653 aa)) are extracellular. Asparagine 37 carries an N-linked (GlcNAc...) asparagine; by host glycan. Cysteine 44 and cysteine 57 are disulfide-bonded. Residues asparagine 70, asparagine 114, asparagine 148, asparagine 195, asparagine 205, asparagine 237, asparagine 247, asparagine 270, asparagine 276, asparagine 287, and asparagine 298 are each glycosylated (N-linked (GlcNAc...) asparagine; by host). 4 disulfide bridges follow: cysteine 101/cysteine 213, cysteine 108/cysteine 204, cysteine 113/cysteine 162, and cysteine 236/cysteine 248. The V1 stretch occupies residues 113-161 (CNKTWSSASKETTTSSASLRSSTQTLLNEDSKCIQNDSCAGIGLEEMID). The tract at residues 162–204 (CQFKMTGLKRDESKQYKDTWYKQDLVCEKGTRSNESKCYIKTC) is V2. Positions 303–335 (CKRPGNKMVVPIRTVSGILFHSQPINKRPKQAW) are V3. A disulfide bridge connects residues cysteine 303 and cysteine 336. 7 N-linked (GlcNAc...) asparagine; by host glycosylation sites follow: asparagine 341, asparagine 364, asparagine 396, asparagine 406, asparagine 445, asparagine 461, and asparagine 464. Cystine bridges form between cysteine 388/cysteine 444 and cysteine 395/cysteine 417. Positions 395-417 (CNMTFFLNWVENRTGLKRNYASC) are V4. Residues 461 to 467 (NLTNITV) form a V5 region. Residues 510–530 (GVLVLGFLGFLATAGSAMGAA) are fusion peptide. The interval 573 to 589 (LQARVTAIEKYLKDQAQ) is immunosuppression. Residues asparagine 609, asparagine 618, and asparagine 634 are each glycosylated (N-linked (GlcNAc...) asparagine; by host). Positions 622–648 (QQWERQVRFLDANITKLLEEAQIQQEK) form a coiled coil. Residues 655 to 676 (KLNQWDIFSNWFDFTSWMAYIR) form an MPER; binding to GalCer region. The chain crosses the membrane as a helical span at residues 678–698 (GLYIVIGIVVLRIAIYIIQML). At 699-852 (ARLRKGYRPV…IRQGAELALL (154 aa)) the chain is on the cytoplasmic side. The YXXV motif; contains endocytosis signal motif lies at 705–708 (YRPV). A disordered region spans residues 713 to 740 (PSYTQQIPIRKDRGQPANEETEEGGGNN). Residue cysteine 771 is the site of S-palmitoyl cysteine; by host attachment. Positions 851 to 852 (LL) match the Di-leucine internalization motif motif.

As to quaternary structure, the mature envelope protein (Env) consists of a homotrimer of non-covalently associated gp120-gp41 heterodimers. The resulting complex protrudes from the virus surface as a spike. There seems to be as few as 10 spikes on the average virion. Interacts with human CD4, CCR5 and CXCR4, to form a P4HB/PDI-CD4-CXCR4-gp120 complex. Gp120 also interacts with the C-type lectins CD209/DC-SIGN and CLEC4M/DC-SIGNR (collectively referred to as DC-SIGN(R)). Gp120 and gp41 interact with GalCer. In terms of assembly, the mature envelope protein (Env) consists of a homotrimer of non-covalently associated gp120-gp41 heterodimers. The resulting complex protrudes from the virus surface as a spike. There seems to be as few as 10 spikes on the average virion. In terms of processing, specific enzymatic cleavages in vivo yield mature proteins. Envelope glycoproteins are synthesized as an inactive precursor that is heavily N-glycosylated and processed likely by host cell furin in the Golgi to yield the mature SU and TM proteins. The cleavage site between SU and TM requires the minimal sequence [KR]-X-[KR]-R. Post-translationally, palmitoylation of the transmembrane protein and of Env polyprotein (prior to its proteolytic cleavage) is essential for their association with host cell membrane lipid rafts. Palmitoylation is therefore required for envelope trafficking to classical lipid rafts, but not for viral replication.

It is found in the virion membrane. The protein localises to the host cell membrane. It localises to the host endosome membrane. Its function is as follows. The surface protein gp120 (SU) attaches the virus to the host lymphoid cell by binding to the primary receptor CD4. This interaction induces a structural rearrangement creating a high affinity binding site for a chemokine coreceptor like CXCR4 and/or CCR5. This peculiar 2 stage receptor-interaction strategy allows gp120 to maintain the highly conserved coreceptor-binding site in a cryptic conformation, protected from neutralizing antibodies. Since CD4 also displays a binding site for the disulfide-isomerase P4HB/PDI, a P4HB/PDI-CD4-CXCR4-gp120 complex may form. In that complex, P4HB/PDI could reach and reduce gp120 disulfide bonds, causing major conformational changes in gp120. TXN, another PDI family member could also be involved in disulfide rearrangements in Env during fusion. These changes are transmitted to the transmembrane protein gp41 and are thought to activate its fusogenic potential by unmasking its fusion peptide. Functionally, the surface protein gp120 is a ligand for CD209/DC-SIGN and CLEC4M/DC-SIGNR, which are respectively found on dendritic cells (DCs), and on endothelial cells of liver sinusoids and lymph node sinuses. These interactions allow capture of viral particles at mucosal surfaces by these cells and subsequent transmission to permissive cells. DCs are professional antigen presenting cells, critical for host immunity by inducing specific immune responses against a broad variety of pathogens. They act as sentinels in various tissues where they take up antigen, process it, and present it to T-cells following migration to lymphoid organs. HIV subverts the migration properties of dendritic cells to gain access to CD4+ T-cells in lymph nodes. Virus transmission to permissive T-cells occurs either in trans (without DCs infection, through viral capture and transmission), or in cis (following DCs productive infection, through the usual CD4-gp120 interaction), thereby inducing a robust infection. In trans infection, bound virions remain infectious over days and it is proposed that they are not degraded, but protected in non-lysosomal acidic organelles within the DCs close to the cell membrane thus contributing to the viral infectious potential during DCs' migration from the periphery to the lymphoid tissues. On arrival at lymphoid tissues, intact virions recycle back to DCs' cell surface allowing virus transmission to CD4+ T-cells. Virion capture also seems to lead to MHC-II-restricted viral antigen presentation, and probably to the activation of HIV-specific CD4+ cells. In terms of biological role, the transmembrane protein gp41 (TM) acts as a class I viral fusion protein. Under the current model, the protein has at least 3 conformational states: pre-fusion native state, pre-hairpin intermediate state, and post-fusion hairpin state. During fusion of viral and target intracellular membranes, the coiled coil regions (heptad repeats) assume a trimer-of-hairpins structure, positioning the fusion peptide in close proximity to the C-terminal region of the ectodomain. The formation of this structure appears to drive apposition and subsequent fusion of viral and target cell membranes. Complete fusion occurs in host cell endosomes and is dynamin-dependent, however some lipid transfer might occur at the plasma membrane. The virus undergoes clathrin-dependent internalization long before endosomal fusion, thus minimizing the surface exposure of conserved viral epitopes during fusion and reducing the efficacy of inhibitors targeting these epitopes. Membranes fusion leads to delivery of the nucleocapsid into the cytoplasm. The envelope glycoprotein gp160 precursor down-modulates cell surface CD4 antigen by interacting with it in the endoplasmic reticulum and blocking its transport to the cell surface. Its function is as follows. The gp120-gp41 heterodimer seems to contribute to T-cell depletion during HIV-1 infection. The envelope glycoproteins expressed on the surface of infected cells induce apoptosis through an interaction with uninfected cells expressing the receptor (CD4) and the coreceptors CXCR4 or CCR5. This type of bystander killing may be obtained by at least three distinct mechanisms. First, the interaction between the 2 cells can induce cellular fusion followed by nuclear fusion within the syncytium. Syncytia are condemned to die from apoptosis. Second, the 2 interacting cells may not fuse entirely and simply exchange plasma membrane lipids, after a sort of hemifusion process, followed by rapid death. Third, it is possible that virus-infected cells, on the point of undergoing apoptosis, fuse with CD4-expressing cells, in which case apoptosis is rapidly transmitted from one cell to the other and thus occurs in a sort of contagious fashion. Functionally, the gp120-gp41 heterodimer allows rapid transcytosis of the virus through CD4 negative cells such as simple epithelial monolayers of the intestinal, rectal and endocervical epithelial barriers. Both gp120 and gp41 specifically recognize glycosphingolipids galactosyl-ceramide (GalCer) or 3' sulfo-galactosyl-ceramide (GalS) present in the lipid rafts structures of epithelial cells. Binding to these alternative receptors allows the rapid transcytosis of the virus through the epithelial cells. This transcytotic vesicle-mediated transport of virions from the apical side to the basolateral side of the epithelial cells does not involve infection of the cells themselves. This Human immunodeficiency virus type 2 subtype B (isolate EHO) (HIV-2) protein is Envelope glycoprotein gp160 (env).